Here is a 93-residue protein sequence, read N- to C-terminus: Alpha-defensin 5 (93 aa).

A signal peptide spans 1–19; it reads MKTFVLLSALVLLAFQVQA. The propeptide occupies 20 to 58; it reads DPIHKTDEETNTEEQPGEEDQAVSISFGGQEGSALHEEL. Disulfide bonds link Cys64/Cys92, Cys66/Cys81, and Cys71/Cys91.

It belongs to the alpha-defensin family.

The protein resides in the secreted. Its function is as follows. Probably contributes to the antimicrobial barrier function of the small bowel mucosa. The protein is Alpha-defensin 5 (Defa5) of Mus musculus (Mouse).